A 323-amino-acid chain; its full sequence is GTP 3',8-cyclase (323 aa).

The Radical SAM core domain maps to 4–228 (KYGRSIDYLR…VPVNIQNNGP (225 aa)). R13 serves as a coordination point for GTP. C20 and C24 together coordinate [4Fe-4S] cluster. Y26 contributes to the S-adenosyl-L-methionine binding site. C27 lines the [4Fe-4S] cluster pocket. A GTP-binding site is contributed by R63. Position 67 (G67) interacts with S-adenosyl-L-methionine. Residue T94 participates in GTP binding. S-adenosyl-L-methionine is bound at residue S118. K155 contributes to the GTP binding site. M189 serves as a coordination point for S-adenosyl-L-methionine. [4Fe-4S] cluster contacts are provided by C252 and C255. Residue 257–259 (RMR) coordinates GTP. C269 provides a ligand contact to [4Fe-4S] cluster.

The protein belongs to the radical SAM superfamily. MoaA family. In terms of assembly, monomer and homodimer. [4Fe-4S] cluster is required as a cofactor.

It catalyses the reaction GTP + AH2 + S-adenosyl-L-methionine = (8S)-3',8-cyclo-7,8-dihydroguanosine 5'-triphosphate + 5'-deoxyadenosine + L-methionine + A + H(+). It participates in cofactor biosynthesis; molybdopterin biosynthesis. Functionally, catalyzes the cyclization of GTP to (8S)-3',8-cyclo-7,8-dihydroguanosine 5'-triphosphate. This is GTP 3',8-cyclase from Petrotoga mobilis (strain DSM 10674 / SJ95).